A 244-amino-acid chain; its full sequence is Glycoprotein 3 (244 aa).

Its function is as follows. Although P4 acquires its capsid proteins from helper phages such as P2, it possesses the ability to assemble capsids that are only one-third the size of the helper's capsid. The sid protein is responsible for the assembly of P4-sized shells. It forms a P4-specific scaffold with icosahedral symmetry on the outside of the procapsid-like particles. This is Glycoprotein 3 (sid) from Enterobacteria phage P4 (Bacteriophage P4).